A 291-amino-acid chain; its full sequence is AA14 family lytic polysaccharide monooxygenase (291 aa).

Residues 1–17 (MLTTAILFTSLAGSAYA) form the signal peptide. N-linked (GlcNAc...) asparagine glycosylation is present at N141. 3 disulfide bridges follow: C192/C197, C199/C220, and C240/C247.

This sequence belongs to the polysaccharide monooxygenase AA14 family. Cu(2+) is required as a cofactor.

The protein localises to the secreted. Its function is as follows. Lytic polysaccharide monooxygenase (LPMO) that is active against heteroxylan, xyloglucan and cellulose in beta-cellulose and released native oligosaccharides and corresponding C1- and/or C4-oxidized products. May act mainly on heteroxylan with numerous arabinosyl substituents between cellulose fibers rather than on recalcitrant xylan tightly associated with cellulose. Catalysis by LPMOs requires the reduction of the active-site copper from Cu(II) to Cu(I) by a reducing agent and H(2)O(2) or O(2) as a cosubstrate. Shows a branched chain preference, and has synergistic effects with the Penicillium parvum debranching enzyme ABF62C in an enzyme- and ascorbic acid-dependent manner. Also has synergistic effects with the Penicillium parvum GH10 endoxylanase XYN1, and the degree of synergy was greater with step-by-step addition than with simultaneous addition. The polypeptide is AA14 family lytic polysaccharide monooxygenase (Sordaria brevicollis).